A 115-amino-acid chain; its full sequence is Large ribosomal subunit protein uL22c (115 aa).

It belongs to the universal ribosomal protein uL22 family. Part of the 50S ribosomal subunit.

Its subcellular location is the plastid. The protein resides in the chloroplast. Functionally, this protein binds specifically to 23S rRNA. The globular domain of the protein is located near the polypeptide exit tunnel on the outside of the subunit, while an extended beta-hairpin is found that lines the wall of the exit tunnel in the center of the 70S ribosome. The protein is Large ribosomal subunit protein uL22c (rpl22) of Thalassiosira pseudonana (Marine diatom).